Reading from the N-terminus, the 137-residue chain is Probable histone H2AXa (137 aa).

Residues 1–10 (MSSSQGGGGR) are compositionally biased toward gly residues. The disordered stretch occupies residues 1-21 (MSSSQGGGGRGKAKTTKAVSR). The residue at position 134 (Ser134) is a Phosphoserine; by ATM and ATR. The [ST]-Q motif signature appears at 134 to 135 (SQ).

It belongs to the histone H2A family. As to quaternary structure, the nucleosome is a histone octamer containing two molecules each of H2A, H2B, H3 and H4 assembled in one H3-H4 heterotetramer and two H2A-H2B heterodimers. The octamer wraps approximately 147 bp of DNA. Interacts with numerous proteins required for DNA damage signaling and repair when phosphorylated on Ser-134. In terms of processing, phosphorylated to form H2AXS139ph (gamma-H2AX) in response to DNA double strand breaks (DSBs) generated by exogenous genotoxic agents and by stalled replication forks, and may also occur during meiotic recombination events. Phosphorylation can extend up to several thousand nucleosomes from the actual site of the DSB and may mark the surrounding chromatin for recruitment of proteins required for DNA damage signaling and repair. Widespread phosphorylation may also serve to amplify the damage signal or aid repair of persistent lesions. H2AXS139ph in response to ionizing radiation is mediated by ATM while defects in DNA replication induce H2AXS139ph subsequent to activation of ATR. Dephosphorylation of H2AXS139ph by PP2A is required for DNA DSB repair.

The protein resides in the nucleus. It is found in the chromosome. Variant histone H2A which replaces conventional H2A in a subset of nucleosomes. Nucleosomes wrap and compact DNA into chromatin, limiting DNA accessibility to the cellular machineries which require DNA as a template. Histones thereby play a central role in transcription regulation, DNA repair, DNA replication and chromosomal stability. DNA accessibility is regulated via a complex set of post-translational modifications of histones, also called histone code, and nucleosome remodeling. Required for checkpoint-mediated arrest of cell cycle progression in response to low doses of ionizing radiation and for efficient repair of DNA double strand breaks (DSBs) specifically when modified by C-terminal phosphorylation. This is Probable histone H2AXa from Oryza sativa subsp. indica (Rice).